A 464-amino-acid polypeptide reads, in one-letter code: Clusterin-like protein 1 (464 aa).

Positions 1-20 are cleaved as a signal peptide; that stretch reads MQPPLFVISVYLLWLKYCDS. Residues 56-109 adopt a coiled-coil conformation; the sequence is IKQMKIMMERREEEHAKLMKALKKCKEEKQEAQKLMNEVQERLEEEEKLCQASS. 5 disulfides stabilise this stretch: C105-C331, C116-C323, C119-C320, C124-C313, and C131-C303. Residues N195, N255, N309, N349, N398, and N429 are each glycosylated (N-linked (GlcNAc...) asparagine).

It belongs to the clusterin family.

Its subcellular location is the secreted. The sequence is that of Clusterin-like protein 1 from Rattus norvegicus (Rat).